A 614-amino-acid chain; its full sequence is BTB/POZ domain-containing protein At5g48800 (614 aa).

Residues 43-111 (SDITIEVNGG…CYGINFEITS (69 aa)) form the BTB domain. Positions 219–484 (DWWIEDLSVL…VQVLYFEQLK (266 aa)) constitute an NPH3 domain. The residue at position 425 (Tyr-425) is a Phosphotyrosine. 2 disordered regions span residues 492 to 525 (SYSD…KDNY) and 583 to 614 (GHSS…ASTD). The span at 507–521 (SWRINSGALSATMSP) shows a compositional bias: polar residues. A coiled-coil region spans residues 522 to 562 (KDNYASLRRENRELKLELARLRMRLNDLEKEHICMKRDMQR). Positions 583–597 (GHSSSRGSSSPSKQS) are enriched in low complexity.

Belongs to the NPH3 family.

Its pathway is protein modification; protein ubiquitination. In terms of biological role, may act as a substrate-specific adapter of an E3 ubiquitin-protein ligase complex (CUL3-RBX1-BTB) which mediates the ubiquitination and subsequent proteasomal degradation of target proteins. This Arabidopsis thaliana (Mouse-ear cress) protein is BTB/POZ domain-containing protein At5g48800.